The sequence spans 234 residues: Glutathione S-transferase 1 (234 aa).

Positions L3–H90 constitute a GST N-terminal domain. One can recognise a GST C-terminal domain in the interval D96–F234.

The protein belongs to the GST superfamily. Homodimer.

It localises to the endoplasmic reticulum membrane. The catalysed reaction is RX + glutathione = an S-substituted glutathione + a halide anion + H(+). This is Glutathione S-transferase 1 (GTT1) from Saccharomyces cerevisiae (strain ATCC 204508 / S288c) (Baker's yeast).